Consider the following 184-residue polypeptide: Threonylcarbamoyl-AMP synthase (184 aa).

The YrdC-like domain maps to 1 to 184; that stretch reads MNNLENIVEQ…IFTQHIFRQG (184 aa).

Belongs to the SUA5 family. TsaC subfamily.

The protein localises to the cytoplasm. The enzyme catalyses L-threonine + hydrogencarbonate + ATP = L-threonylcarbamoyladenylate + diphosphate + H2O. Its function is as follows. Required for the formation of a threonylcarbamoyl group on adenosine at position 37 (t(6)A37) in tRNAs that read codons beginning with adenine. Catalyzes the conversion of L-threonine, HCO(3)(-)/CO(2) and ATP to give threonylcarbamoyl-AMP (TC-AMP) as the acyladenylate intermediate, with the release of diphosphate. In Actinobacillus pleuropneumoniae serotype 5b (strain L20), this protein is Threonylcarbamoyl-AMP synthase.